The primary structure comprises 145 residues: Male-specific protein scotti (145 aa).

The disordered stretch occupies residues 1-34; it reads MANNRLMPEGQIIEEDMDGEDQNARELDIDDDDD. Positions 12-21 are enriched in acidic residues; the sequence is IIEEDMDGED.

It belongs to the male-specific scotti family.

Functionally, post-meiotically transcribed gene that has a role in late spermiogenesis; required for actin cone progression during spermatid individualization. This Drosophila willistoni (Fruit fly) protein is Male-specific protein scotti.